Reading from the N-terminus, the 288-residue chain is Bifunctional protein FolD (288 aa).

Residues 166-168 (GRS), serine 191, and valine 232 each bind NADP(+).

It belongs to the tetrahydrofolate dehydrogenase/cyclohydrolase family. As to quaternary structure, homodimer.

It catalyses the reaction (6R)-5,10-methylene-5,6,7,8-tetrahydrofolate + NADP(+) = (6R)-5,10-methenyltetrahydrofolate + NADPH. The catalysed reaction is (6R)-5,10-methenyltetrahydrofolate + H2O = (6R)-10-formyltetrahydrofolate + H(+). It participates in one-carbon metabolism; tetrahydrofolate interconversion. Its function is as follows. Catalyzes the oxidation of 5,10-methylenetetrahydrofolate to 5,10-methenyltetrahydrofolate and then the hydrolysis of 5,10-methenyltetrahydrofolate to 10-formyltetrahydrofolate. In Roseiflexus sp. (strain RS-1), this protein is Bifunctional protein FolD.